The chain runs to 114 residues: Large ribosomal subunit protein bL19 (114 aa).

Belongs to the bacterial ribosomal protein bL19 family.

Its function is as follows. This protein is located at the 30S-50S ribosomal subunit interface and may play a role in the structure and function of the aminoacyl-tRNA binding site. The chain is Large ribosomal subunit protein bL19 from Listeria welshimeri serovar 6b (strain ATCC 35897 / DSM 20650 / CCUG 15529 / CIP 8149 / NCTC 11857 / SLCC 5334 / V8).